Reading from the N-terminus, the 297-residue chain is MATH domain and coiled-coil domain-containing protein At2g05420 (297 aa).

An MATH domain is found at 7–139; the sequence is SKTITWVIEN…NGELTLVAKV (133 aa). Positions 239–281 form a coiled coil; that stretch reads KLDWLEKKHGEIKEKKKKEEASLKRLQEMEKQIFNEAQIYKEK.

The sequence is that of MATH domain and coiled-coil domain-containing protein At2g05420 from Arabidopsis thaliana (Mouse-ear cress).